Consider the following 309-residue polypeptide: Homoserine O-succinyltransferase (309 aa).

The Acyl-thioester intermediate role is filled by Cys142. The substrate site is built by Lys163 and Ser192. The Proton acceptor role is filled by His235. Residue Glu237 is part of the active site. Substrate is bound at residue Arg249.

Belongs to the MetA family. Homodimer.

Its subcellular location is the cytoplasm. The catalysed reaction is L-homoserine + succinyl-CoA = O-succinyl-L-homoserine + CoA. It functions in the pathway amino-acid biosynthesis; L-methionine biosynthesis via de novo pathway; O-succinyl-L-homoserine from L-homoserine: step 1/1. Transfers a succinyl group from succinyl-CoA to L-homoserine, forming succinyl-L-homoserine. The chain is Homoserine O-succinyltransferase from Salmonella arizonae (strain ATCC BAA-731 / CDC346-86 / RSK2980).